Consider the following 1184-residue polypeptide: DNA-directed RNA polymerase subunit beta (1184 aa).

The interval 1160-1184 (DDDFTNQNDAFNIVQPENAAAEKTE) is disordered.

The protein belongs to the RNA polymerase beta chain family. The RNAP catalytic core consists of 2 alpha, 1 beta, 1 beta' and 1 omega subunit. When a sigma factor is associated with the core the holoenzyme is formed, which can initiate transcription.

It catalyses the reaction RNA(n) + a ribonucleoside 5'-triphosphate = RNA(n+1) + diphosphate. DNA-dependent RNA polymerase catalyzes the transcription of DNA into RNA using the four ribonucleoside triphosphates as substrates. In Listeria monocytogenes serotype 4b (strain F2365), this protein is DNA-directed RNA polymerase subunit beta.